The chain runs to 135 residues: uncharacterized protein (135 aa).

This is an uncharacterized protein from Rickettsia prowazekii (strain Madrid E).